The following is a 381-amino-acid chain: Succinyl-diaminopimelate desuccinylase (381 aa).

H69 serves as a coordination point for Zn(2+). D71 is a catalytic residue. D103 lines the Zn(2+) pocket. E137 serves as the catalytic Proton acceptor. Positions 138, 166, and 355 each coordinate Zn(2+).

It belongs to the peptidase M20A family. DapE subfamily. Homodimer. Zn(2+) serves as cofactor. It depends on Co(2+) as a cofactor.

The enzyme catalyses N-succinyl-(2S,6S)-2,6-diaminopimelate + H2O = (2S,6S)-2,6-diaminopimelate + succinate. Its pathway is amino-acid biosynthesis; L-lysine biosynthesis via DAP pathway; LL-2,6-diaminopimelate from (S)-tetrahydrodipicolinate (succinylase route): step 3/3. Functionally, catalyzes the hydrolysis of N-succinyl-L,L-diaminopimelic acid (SDAP), forming succinate and LL-2,6-diaminopimelate (DAP), an intermediate involved in the bacterial biosynthesis of lysine and meso-diaminopimelic acid, an essential component of bacterial cell walls. The polypeptide is Succinyl-diaminopimelate desuccinylase (Rickettsia felis (strain ATCC VR-1525 / URRWXCal2) (Rickettsia azadi)).